The primary structure comprises 96 residues: uncharacterized protein (96 aa).

An N-terminal signal peptide occupies residues 1 to 19; sequence MKFLSALLLIVLLISVVFG. Asparagine 20 carries an N-linked (GlcNAc...) asparagine glycan. The span at 27–46 shows a compositional bias: low complexity; the sequence is AWATTTTGGTTGSQTSPATH. The disordered stretch occupies residues 27–58; it reads AWATTTTGGTTGSQTSPATHGGHGGNGGNGHS. Over residues 47-56 the composition is skewed to gly residues; the sequence is GGHGGNGGNG.

It localises to the secreted. This is an uncharacterized protein from Dictyostelium discoideum (Social amoeba).